Consider the following 679-residue polypeptide: UvrABC system protein B (679 aa).

Positions Glu31–Ile414 constitute a Helicase ATP-binding domain. Gly44–Thr51 provides a ligand contact to ATP. Positions Tyr97–Ile120 match the Beta-hairpin motif. Residues Gln436–Ile589 form the Helicase C-terminal domain. The region spanning Gln639–Gln674 is the UVR domain.

Belongs to the UvrB family. Forms a heterotetramer with UvrA during the search for lesions. Interacts with UvrC in an incision complex.

Its subcellular location is the cytoplasm. Its function is as follows. The UvrABC repair system catalyzes the recognition and processing of DNA lesions. A damage recognition complex composed of 2 UvrA and 2 UvrB subunits scans DNA for abnormalities. Upon binding of the UvrA(2)B(2) complex to a putative damaged site, the DNA wraps around one UvrB monomer. DNA wrap is dependent on ATP binding by UvrB and probably causes local melting of the DNA helix, facilitating insertion of UvrB beta-hairpin between the DNA strands. Then UvrB probes one DNA strand for the presence of a lesion. If a lesion is found the UvrA subunits dissociate and the UvrB-DNA preincision complex is formed. This complex is subsequently bound by UvrC and the second UvrB is released. If no lesion is found, the DNA wraps around the other UvrB subunit that will check the other stand for damage. The chain is UvrABC system protein B from Haemophilus influenzae (strain ATCC 51907 / DSM 11121 / KW20 / Rd).